A 321-amino-acid polypeptide reads, in one-letter code: Ferredoxin--NADP reductase (321 aa).

D34, Q42, Y47, V87, F119, D278, and T319 together coordinate FAD.

This sequence belongs to the ferredoxin--NADP reductase type 2 family. In terms of assembly, homodimer. The cofactor is FAD.

The enzyme catalyses 2 reduced [2Fe-2S]-[ferredoxin] + NADP(+) + H(+) = 2 oxidized [2Fe-2S]-[ferredoxin] + NADPH. In Streptococcus pneumoniae serotype 4 (strain ATCC BAA-334 / TIGR4), this protein is Ferredoxin--NADP reductase.